Consider the following 869-residue polypeptide: Nitrogen permease regulator 3 (869 aa).

The N-terminal stretch at 1 to 23 is a signal peptide; that stretch reads MSSIARPPDPCLVAIILIVRSRA. Disordered stretches follow at residues 31–180, 228–275, 662–702, and 842–869; these read YPPN…RPPW, WRKQ…PDRG, KRGS…GRYK, and KTIS…TPTN. The span at 45–55 shows a compositional bias: basic residues; sequence PKARRPSRKNS. 2 stretches are compositionally biased toward low complexity: residues 57–70 and 80–102; these read SNES…SSTS and TATA…TQNA. Positions 115-129 are enriched in polar residues; it reads RSSNFGVVDDTTISG. The segment covering 229 to 239 has biased composition (basic residues); the sequence is RKQRRKKRKPR. Positions 254-271 are enriched in acidic residues; the sequence is GDGDGDGEGDEAGTEDDS. Over residues 679–692 the composition is skewed to low complexity; it reads SSSSSSSLGSNGSG. The segment covering 842–853 has biased composition (polar residues); that stretch reads KTISPNPASSHV.

The protein belongs to the NPR3 family.

Functionally, mediates inactivation of the TORC1 complex in response to amino acid starvation. Required for meiotic nuclear division. The chain is Nitrogen permease regulator 3 (npr3) from Aspergillus niger (strain ATCC MYA-4892 / CBS 513.88 / FGSC A1513).